The following is a 1479-amino-acid chain: MVPIRPALAPWPRHLLRCVLLLGGLRLGHPADSAAALLEPDVFLIFSQGMQGCLEAQGVQVRVTPVCNASLPAQRWKWVSRNRLFNLGATQCLGTGWPVTNTTVSLGMYECDREALSLRWQCRTLGDQLSLLLGARASNASKPGTLERGDQTRSGHWNIYGSEEDLCARPYYEVYTIQGNSHGKPCTIPFKYDNQWFHGCTSTGREDGHLWCATTQDYGKDERWGFCPIKSNDCETFWDKDQLTDSCYQFNFQSTLSWREAWASCEQQGADLLSITEIHEQTYINGLLTGYSSTLWIGLNDLDTSGGWQWSDNSPLKYLNWESDQPDNPGEENCGVIRTESSGGWQNHDCSIALPYVCKKKPNATVEPIQPDRWTNVKVECDPSWQPFQGHCYRLQAEKRSWQESKRACLRGGGDLLSIHSMAELEFITKQIKQEVEELWIGLNDLKLQMNFEWSDGSLVSFTHWHPFEPNNFRDSLEDCVTIWGPEGRWNDSPCNQSLPSICKKAGRLSQGAAEEDHGCRKGWTWHSPSCYWLGEDQVIYSDARRLCTDHGSQLVTITNRFEQAFVSSLIYNWEGEYFWTALQDLNSTGSFRWLSGDEVIYTHWNRDQPGYRRGGCVALATGSAMGLWEVKNCTSFRARYICRQSLGTPVTPELPGPDPTPSLTGSCPQGWVSDPKLRHCYKVFSSERLQEKKSWIQALGVCRELGAQLLSLASYEEEHFVAHMLNKIFGESEPESHEQHWFWIGLNRRDPREGHSWRWSDGLGFSYHNFARSRHDDDDIRGCAVLDLASLQWVPMQCQTQLDWICKIPRGVDVREPDIGRQGRLEWVRFQEAEYKFFEHHSSWAQAQRICTWFQADLTSVHSQAELDFLGQNLQKLSSDQEQHWWIGLHTLESDGRFRWTDGSIINFISWAPGKPRPIGKDKKCVYMTARQEDWGDQRCHTALPYICKRSNSSGETQPQDLPPSALGGCPSGWNQFLNKCFRIQGQDPQDRVKWSEAQFSCEQQEAQLVTIANPLEQAFITASLPNVTFDLWIGLHASQRDFQWIEQEPLLYTNWAPGEPSGPSPAPSGTKPTSCAVILHSPSAHFTGRWDDRSCTEETHGFICQKGTDPSLSPSPAATPPAPGAELSYLNHTFRLLQKPLRWKDALLLCESRNASLAHVPDPYTQAFLTQAARGLQTPLWIGLASEEGSRRYSWLSEEPLNYVSWQDEEPQHSGGCAYVDVDGTWRTTSCDTKLQGAVCGVSRGPPPRRINYRGSCPQGLADSSWIPFREHCYSFHMEVLLGHKEALQRCQKAGGTVLSILDEMENVFVWEHLQTAEAQSRGAWLGMNFNPKGGTLVWQDNTAVNYSNWGPPGLGPSMLSHNSCYWIQSSSGLWRPGACTNITMGVVCKLPRVEENSFLPSAALPESPVALVVVLTAVLLLLALMTAALILYRRRQSAERGSFEGARYSRSSHSGPAEATEKNILVSDMEMNEQQE.

A signal peptide spans 1-30; the sequence is MVPIRPALAPWPRHLLRCVLLLGGLRLGHP. The Extracellular portion of the chain corresponds to 31-1413; sequence ADSAAALLEP…SAALPESPVA (1383 aa). One can recognise a Ricin B-type lectin domain in the interval 37 to 190; that stretch reads LLEPDVFLIF…SHGKPCTIPF (154 aa). A disulfide bridge links cysteine 92 with cysteine 111. Residues asparagine 101 and asparagine 139 are each glycosylated (N-linked (GlcNAc...) asparagine). One can recognise a Fibronectin type-II domain in the interval 181–229; it reads SHGKPCTIPFKYDNQWFHGCTSTGREDGHLWCATTQDYGKDERWGFCPI. 4 disulfide bridges follow: cysteine 186–cysteine 212, cysteine 200–cysteine 227, cysteine 265–cysteine 358, and cysteine 334–cysteine 350. The region spanning 243 to 359 is the C-type lectin 1 domain; that stretch reads LTDSCYQFNF…CSIALPYVCK (117 aa). A glycan (N-linked (GlcNAc...) asparagine) is linked at asparagine 363. C-type lectin domains are found at residues 388–504, 527–643, 677–808, 831–950, 978–1106, 1131–1242, and 1271–1391; these read FQGH…SICK, HSPS…RYIC, KLRH…WICK, FQEA…YICK, FLNK…GFIC, YLNH…GAVC, and FREH…GVVC. 7 cysteine pairs are disulfide-bonded: cysteine 409-cysteine 503, cysteine 480-cysteine 495, cysteine 617-cysteine 634, cysteine 703-cysteine 807, cysteine 784-cysteine 799, cysteine 852-cysteine 949, and cysteine 926-cysteine 941. N-linked (GlcNAc...) asparagine glycosylation is present at asparagine 1028. Cysteines 1077 and 1097 form a disulfide. Residue lysine 1141 forms a Glycyl lysine isopeptide (Lys-Gly) (interchain with G-Cter in SUMO1) linkage. A disulfide bond links cysteine 1219 and cysteine 1233. Residue asparagine 1348 is glycosylated (N-linked (GlcNAc...) asparagine). A disulfide bridge links cysteine 1367 with cysteine 1382. A helical membrane pass occupies residues 1414–1434; it reads LVVVLTAVLLLLALMTAALIL. Residues 1435–1479 lie on the Cytoplasmic side of the membrane; that stretch reads YRRRQSAERGSFEGARYSRSSHSGPAEATEKNILVSDMEMNEQQE. The disordered stretch occupies residues 1446 to 1479; sequence FEGARYSRSSHSGPAEATEKNILVSDMEMNEQQE.

Interacts directly with PLAUR/UPAR and PLAU/pro-UPA to form a tri-molecular complex. Interacts with collagen V and with C-terminal region of type I collagen/COL1A1. In terms of processing, phosphorylated. As to expression, highly expressed in heart, lung and kidney, but little or no expression in brain, thymus or adult liver. Expressed at highly endothelialized sites such as those in choroid plexus and kidney glomerulai as well as in chondrocytes in cartilaginous regions of the embryo.

It localises to the membrane. Its function is as follows. May play a role as endocytotic lectin receptor displaying calcium-dependent lectin activity. Internalizes glycosylated ligands from the extracellular space for release in an endosomal compartment via clathrin-mediated endocytosis. May be involved in plasminogen activation system controlling the extracellular level of PLAUR/PLAU, and thus may regulate protease activity at the cell surface. May contribute to cellular uptake, remodeling and degradation of extracellular collagen matrices. May participate in remodeling of extracellular matrix cooperating with the matrix metalloproteinases (MMPs). This is C-type mannose receptor 2 (Mrc2) from Mus musculus (Mouse).